The chain runs to 143 residues: Transcriptional regulator MraZ (143 aa).

2 SpoVT-AbrB domains span residues 5 to 47 (EYRH…PQSE) and 76 to 119 (ASEC…SKTL).

This sequence belongs to the MraZ family. Forms oligomers.

Its subcellular location is the cytoplasm. It is found in the nucleoid. The sequence is that of Transcriptional regulator MraZ from Shouchella clausii (strain KSM-K16) (Alkalihalobacillus clausii).